We begin with the raw amino-acid sequence, 184 residues long: GTP-dependent dephospho-CoA kinase (184 aa).

GTP is bound by residues D33, V34, D52, K54, and E103.

It belongs to the GTP-dependent DPCK family.

It catalyses the reaction 3'-dephospho-CoA + GTP = GDP + CoA + H(+). The protein operates within cofactor biosynthesis; coenzyme A biosynthesis. Functionally, catalyzes the GTP-dependent phosphorylation of the 3'-hydroxyl group of dephosphocoenzyme A to form coenzyme A (CoA). This is GTP-dependent dephospho-CoA kinase from Ignicoccus hospitalis (strain KIN4/I / DSM 18386 / JCM 14125).